Reading from the N-terminus, the 236-residue chain is Orotidine 5'-phosphate decarboxylase (236 aa).

Substrate contacts are provided by residues aspartate 16, lysine 38, 65-74 (DLKLHDIGNT), threonine 123, arginine 184, glutamine 193, glycine 213, and arginine 214. Residue lysine 67 is the Proton donor of the active site.

The protein belongs to the OMP decarboxylase family. Type 1 subfamily. Homodimer.

The catalysed reaction is orotidine 5'-phosphate + H(+) = UMP + CO2. The protein operates within pyrimidine metabolism; UMP biosynthesis via de novo pathway; UMP from orotate: step 2/2. In terms of biological role, catalyzes the decarboxylation of orotidine 5'-monophosphate (OMP) to uridine 5'-monophosphate (UMP). The protein is Orotidine 5'-phosphate decarboxylase of Methylobacterium nodulans (strain LMG 21967 / CNCM I-2342 / ORS 2060).